The chain runs to 313 residues: Ribosomal RNA small subunit methyltransferase H (313 aa).

Residues 33 to 35 (GGH), aspartate 53, phenylalanine 80, aspartate 102, and glutamine 109 contribute to the S-adenosyl-L-methionine site. The segment at 291-313 (SDEEMRANPRAQSAKLRAAEKIR) is disordered.

Belongs to the methyltransferase superfamily. RsmH family.

The protein localises to the cytoplasm. It catalyses the reaction cytidine(1402) in 16S rRNA + S-adenosyl-L-methionine = N(4)-methylcytidine(1402) in 16S rRNA + S-adenosyl-L-homocysteine + H(+). In terms of biological role, specifically methylates the N4 position of cytidine in position 1402 (C1402) of 16S rRNA. The sequence is that of Ribosomal RNA small subunit methyltransferase H from Heliobacterium modesticaldum (strain ATCC 51547 / Ice1).